A 347-amino-acid polypeptide reads, in one-letter code: Adenine deaminase (347 aa).

Positions 16, 18, and 204 each coordinate Zn(2+). The Proton donor role is filled by E207. Residue D285 participates in Zn(2+) binding. D286 serves as a coordination point for substrate.

This sequence belongs to the metallo-dependent hydrolases superfamily. Adenosine and AMP deaminases family. Adenine deaminase type 2 subfamily. Requires Zn(2+) as cofactor.

The protein resides in the cytoplasm. The protein localises to the nucleus. The enzyme catalyses adenine + H2O + H(+) = hypoxanthine + NH4(+). Catalyzes the hydrolytic deamination of adenine to hypoxanthine. Plays an important role in the purine salvage pathway and in nitrogen catabolism. This chain is Adenine deaminase, found in Candida glabrata (strain ATCC 2001 / BCRC 20586 / JCM 3761 / NBRC 0622 / NRRL Y-65 / CBS 138) (Yeast).